Consider the following 193-residue polypeptide: ATP-dependent Clp protease proteolytic subunit 1 (193 aa).

S98 serves as the catalytic Nucleophile. Residue H123 is part of the active site.

The protein belongs to the peptidase S14 family. In terms of assembly, fourteen ClpP subunits assemble into 2 heptameric rings which stack back to back to give a disk-like structure with a central cavity, resembling the structure of eukaryotic proteasomes.

Its subcellular location is the cytoplasm. The catalysed reaction is Hydrolysis of proteins to small peptides in the presence of ATP and magnesium. alpha-casein is the usual test substrate. In the absence of ATP, only oligopeptides shorter than five residues are hydrolyzed (such as succinyl-Leu-Tyr-|-NHMec, and Leu-Tyr-Leu-|-Tyr-Trp, in which cleavage of the -Tyr-|-Leu- and -Tyr-|-Trp bonds also occurs).. Cleaves peptides in various proteins in a process that requires ATP hydrolysis. Has a chymotrypsin-like activity. Plays a major role in the degradation of misfolded proteins. This is ATP-dependent Clp protease proteolytic subunit 1 from Bacillus cereus (strain ZK / E33L).